Consider the following 1148-residue polypeptide: Envelopment polyprotein (1148 aa).

Residues 1–23 (MGELSPVCLYLLLQGLLLCNTGA) form the signal peptide. Over 24-495 (ARNLNELKME…VPGLHGWATM (472 aa)) the chain is Lumenal. Cystine bridges form between Cys34–Cys159, Cys68–Cys165, Cys117–Cys136, Cys141–Cys146, Cys183–Cys193, and Cys218–Cys257. The N-linked (GlcNAc...) asparagine; by host glycan is linked to Asn142. The N-linked (GlcNAc...) asparagine; by host glycan is linked to Asn357. Disulfide bonds link Cys386–Cys445, Cys390–Cys399, Cys415–Cys434, and Cys462–Cys485. Asn409 is a glycosylation site (N-linked (GlcNAc...) asparagine; by host). Residues 496 to 516 (LLLLTLCFGWVLIPTITMILL) traverse the membrane as a helical segment. Residues 517–637 (KILIAFAYLC…LSLFRYRSRF (121 aa)) lie on the Cytoplasmic side of the membrane. Residues 526 to 543 (CSKYNTDSKFRILIEKVK) are binding to the ribonucleoprotein. CCHC-type zinc fingers lie at residues 555-575 (CEVCQYECETAKELESHRKSC) and 580-601 (CPYCLNPSEATTSALQAHFKVC). Binding to the ribonucleoprotein regions lie at residues 598–615 (FKVCKLTSRFQENLRKSL), 602–613 (KLTSRFQENLRK), and 621–635 (MQGCYRTLSLFRYRS). An ITAM domain is found at 621–644 (MQGCYRTLSLFRYRSRFFVGLVWC). The YxxL motif lies at 625–628 (YRTL). Residues 638 to 658 (FVGLVWCVLLVLELIVWAASA) traverse the membrane as a helical segment. The Lumenal portion of the chain corresponds to 659–1114 (ETQNLNAGWT…EWILGVLNGN (456 aa)). Intrachain disulfides connect Cys745–Cys780, Cys749–Cys787, Cys761–Cys894, Cys775–Cys905, Cys790–Cys913, Cys816–Cys825, Cys833–Cys842, and Cys873–Cys877. The fusion loop stretch occupies residues 767–787 (YEYETGWGCNPPDCPGVGTGC). An N-linked (GlcNAc...) asparagine; by host glycan is attached at Asn937. 5 disulfide bridges follow: Cys979–Cys1009, Cys1002–Cys1054, Cys1019–Cys1024, Cys1055–Cys1060, and Cys1094–Cys1098. The chain crosses the membrane as a helical span at residues 1115-1135 (WMVVAVLVVLLILSILLFTLC). 2 binding to the ribonucleoprotein regions span residues 1131-1143 (LFTLCCPRRPSYR) and 1131-1148 (LFTLCCPRRPSYRKEHKP). Residues 1136–1148 (CPRRPSYRKEHKP) lie on the Cytoplasmic side of the membrane.

The protein belongs to the hantavirus envelope glycoprotein family. As to quaternary structure, homodimer. Homotetramer; forms heterotetrameric Gn-Gc spikes in the pre-fusion conformation. Interacts (via C-terminus) with the nucleoprotein. Interacts with host TUFM; this interaction contributes to the virus-induced degradation of mitochondria by autophagy, which leads to degradation of host MAVS and inhibition of type I interferon (IFN) responses. Interacts with host MAP1LC3B; this interaction contributes to the virus-induced degradation of mitochondria by autophagy, which leads to degradation of host MAVS and inhibition of type I interferon (IFN) responses. Homodimer. Homotetramer; forms heterotetrameric Gn-Gc spikes in the pre-fusion conformation. Homotrimer; forms homotrimer in the post-fusion conformation at acidic pH. Interacts (via C-terminus) with the nucleoprotein. Post-translationally, envelope polyprotein precursor is quickly cleaved in vivo just after synthesis, presumably by host signal peptidase.

The protein resides in the virion membrane. It is found in the host cell surface. The protein localises to the host Golgi apparatus membrane. Its subcellular location is the host endoplasmic reticulum membrane. It localises to the host mitochondrion. In terms of biological role, forms homotetramers with glycoprotein C at the surface of the virion. Attaches the virion to host cell receptors including integrin ITGAV/ITGB3. This attachment induces virion internalization predominantly through clathrin-dependent endocytosis. Mediates the assembly and budding of infectious virus particles through its interaction with the nucleocapsid protein and the viral genome. May dysregulate normal immune and endothelial cell responses through an ITAM motif. Translocates to mitochondria, binds to host TUFM and recruits MAP1LC3B. These interactions induce mitochondrial autophagy and therefore destruction of host MAVS leading to inhibition of type I interferon (IFN) responses. Concomitant breakdown of glycoprotein N is apparently prevented by the nucleoprotein that may inhibit Gn-stimulated autophagosome-lysosome fusion. Interacts with the viral genomic RNA. Functionally, forms homotetramers with glycoprotein N at the surface of the virion. Attaches the virion to host cell receptors including integrin ITGAV/ITGB3. This attachment induces virion internalization predominantly through clathrin-dependent endocytosis. Class II fusion protein that promotes fusion of viral membrane with host endosomal membrane after endocytosis of the virion. In Puumala virus (strain K27), this protein is Envelopment polyprotein (GP).